A 1249-amino-acid chain; its full sequence is LRR receptor-like serine/threonine-protein kinase GSO1 (1249 aa).

A signal peptide spans 1–18; the sequence is MQPLVLLLLFILCFSGLG. Residues 19–876 lie on the Extracellular side of the membrane; the sequence is QPGIINNDLQ…QQGLSARSVV (858 aa). N-linked (GlcNAc...) asparagine glycans are attached at residues asparagine 77 and asparagine 117. LRR repeat units follow at residues 94-118, 119-142, 144-166, 168-190, 191-214, 216-238, 239-262, 264-285, 286-310, 312-334, 336-359, 360-383, 385-407, 408-431, 433-455, 457-479, 480-503, 505-527, 528-551, 553-574, 576-598, 599-622, 623-646, 648-670, 671-694, 696-718, 719-742, 744-766, 767-791, 792-815, and 817-838; these read FDNL…LSNL, TSLE…LGSL, NIRS…LGNL, NLQM…LGRL, VRVQ…LGNC, DLTV…LGRL, ENLE…LGEM, QLQY…SLAD, LGNL…FWNM, QLLD…ICSN, TNLE…LSKC, QSLK…LFEL, ELTD…ISNL, TNLQ…ISAL, KLEV…IGNC, SLKM…IGRL, KELN…LGNC, QLNI…FGFL, KGLE…LISL, NLTR…LCGS, SYLS…LGNS, QNLD…LGKI, RELS…LVLC, KLTH…LGKL, SQLG…LFNC, KLLV…IGNL, GALN…MGKL, KLYE…IGQL, QDLQ…IGTL, SKLE…VGDM, and SLGY…QFSR. Asparagine 213, asparagine 228, and asparagine 248 each carry an N-linked (GlcNAc...) asparagine glycan. N-linked (GlcNAc...) asparagine glycosylation is found at asparagine 298, asparagine 309, and asparagine 334. Residues asparagine 369, asparagine 393, and asparagine 406 are each glycosylated (N-linked (GlcNAc...) asparagine). The N-linked (GlcNAc...) asparagine glycan is linked to asparagine 454. Residues asparagine 537, asparagine 553, asparagine 558, and asparagine 565 are each glycosylated (N-linked (GlcNAc...) asparagine). N-linked (GlcNAc...) asparagine glycans are attached at residues asparagine 693 and asparagine 708. The N-linked (GlcNAc...) asparagine glycan is linked to asparagine 779. Asparagine 822 carries an N-linked (GlcNAc...) asparagine glycan. The helical transmembrane segment at 877-897 threads the bilayer; that stretch reads IISAISALTAIGLMILVIALF. At 898-1249 the chain is on the cytoplasmic side; it reads FKQRHDFFKK…NNRTAGYKKL (352 aa). Threonine 948 is subject to Phosphothreonine. In terms of domain architecture, Protein kinase spans 951–1240; sequence LSEEFMIGSG…ACDSLLHVYN (290 aa). Residues 957–965 and lysine 979 contribute to the ATP site; that span reads IGSGGSGKV. Phosphotyrosine occurs at positions 1027 and 1071. The active-site Proton acceptor is aspartate 1084. 2 positions are modified to phosphotyrosine: tyrosine 1129 and tyrosine 1136.

Belongs to the protein kinase superfamily. Ser/Thr protein kinase family. Interacts with CIF1 and CIF2. As to expression, mostly expressed in siliques, seeds, developing embryos and seedlings, detected in flower buds and roots, but not in leaves or stems.

It localises to the cell membrane. It carries out the reaction L-seryl-[protein] + ATP = O-phospho-L-seryl-[protein] + ADP + H(+). The catalysed reaction is L-threonyl-[protein] + ATP = O-phospho-L-threonyl-[protein] + ADP + H(+). Its function is as follows. Together with GSO2, receptor-like serine/threonine-kinase required during the development of the epidermal surface in embryos and cotyledons. In coordination with GSO2, regulates root growth through control of cell division and cell fate specification. Controls seedling root growth by modulating sucrose response after germination. Receptor of the peptide hormones CIF1 and CIF2 required for contiguous Casparian strip diffusion barrier formation in roots. Required for localizing CASP proteins into the Casparian strip following an uninterrupted, ring-like domain, to trigger endodermal differentiation and thus regulate potassium ion (K) homeostasis. Involved in the maintenance of water transport and root pressure. May also be involved in the regulation of suberin accumulation in the endodermis. In Arabidopsis thaliana (Mouse-ear cress), this protein is LRR receptor-like serine/threonine-protein kinase GSO1.